The chain runs to 184 residues: ADP-ribosylation factor-like protein 2 (184 aa).

Gly-2 carries the N-myristoyl glycine lipid modification. Residues 23 to 30 (GLDNAGKT), 66 to 70 (DVGGQ), Gly-68, and 125 to 128 (NKSD) contribute to the GTP site.

Belongs to the small GTPase superfamily. Arf family.

It is found in the cytoplasm. It localises to the cell membrane. The protein resides in the cytoskeleton. Its subcellular location is the microtubule organizing center. The protein localises to the centrosome. GTP-binding protein that functions in embryogenesis, cytokinesis, germline development and microtubulule cytoskeleton dynamics. In Caenorhabditis briggsae, this protein is ADP-ribosylation factor-like protein 2 (evl-20.1).